Here is a 370-residue protein sequence, read N- to C-terminus: A-type ATP synthase subunit C (370 aa).

The protein belongs to the V-ATPase V0D/AC39 subunit family. In terms of assembly, has multiple subunits with at least A(3), B(3), C, D, E, F, H, I and proteolipid K(x).

The protein localises to the cell membrane. Component of the A-type ATP synthase that produces ATP from ADP in the presence of a proton gradient across the membrane. This is A-type ATP synthase subunit C from Pyrococcus abyssi (strain GE5 / Orsay).